Here is a 228-residue protein sequence, read N- to C-terminus: uncharacterized protein (228 aa).

This is an uncharacterized protein from Archaeoglobus fulgidus (strain ATCC 49558 / DSM 4304 / JCM 9628 / NBRC 100126 / VC-16).